The primary structure comprises 170 residues: Ribosome maturation factor RimM (170 aa).

The PRC barrel domain maps to 98 to 170 (PDEYYWVDLE…LIVVDWDPDF (73 aa)).

Belongs to the RimM family. As to quaternary structure, binds ribosomal protein uS19.

It is found in the cytoplasm. In terms of biological role, an accessory protein needed during the final step in the assembly of 30S ribosomal subunit, possibly for assembly of the head region. Essential for efficient processing of 16S rRNA. May be needed both before and after RbfA during the maturation of 16S rRNA. It has affinity for free ribosomal 30S subunits but not for 70S ribosomes. The polypeptide is Ribosome maturation factor RimM (Xanthomonas oryzae pv. oryzae (strain MAFF 311018)).